The sequence spans 88 residues: Small ribosomal subunit protein bS16 (88 aa).

This sequence belongs to the bacterial ribosomal protein bS16 family.

This chain is Small ribosomal subunit protein bS16, found in Sorangium cellulosum (strain So ce56) (Polyangium cellulosum (strain So ce56)).